The chain runs to 119 residues: Immunoglobulin heavy variable 2-70D (119 aa).

A signal peptide spans methionine 1–serine 19. Residue glutamine 20 is modified to Pyrrolidone carboxylic acid. The interval glutamine 20–serine 44 is framework-1. An Ig-like domain is found at glutamine 20–isoleucine 119. A disulfide bridge links cysteine 41 with cysteine 116. The interval glycine 45–arginine 54 is complementarity-determining-1. Positions valine 55 to arginine 71 are framework-2. A complementarity-determining-2 region spans residues isoleucine 72–lysine 78. The segment at phenylalanine 79–cysteine 116 is framework-3. The tract at residues alanine 117–isoleucine 119 is complementarity-determining-3.

Immunoglobulins are composed of two identical heavy chains and two identical light chains; disulfide-linked.

It localises to the secreted. Its subcellular location is the cell membrane. Its function is as follows. V region of the variable domain of immunoglobulin heavy chains that participates in the antigen recognition. Immunoglobulins, also known as antibodies, are membrane-bound or secreted glycoproteins produced by B lymphocytes. In the recognition phase of humoral immunity, the membrane-bound immunoglobulins serve as receptors which, upon binding of a specific antigen, trigger the clonal expansion and differentiation of B lymphocytes into immunoglobulins-secreting plasma cells. Secreted immunoglobulins mediate the effector phase of humoral immunity, which results in the elimination of bound antigens. The antigen binding site is formed by the variable domain of one heavy chain, together with that of its associated light chain. Thus, each immunoglobulin has two antigen binding sites with remarkable affinity for a particular antigen. The variable domains are assembled by a process called V-(D)-J rearrangement and can then be subjected to somatic hypermutations which, after exposure to antigen and selection, allow affinity maturation for a particular antigen. The chain is Immunoglobulin heavy variable 2-70D from Homo sapiens (Human).